A 238-amino-acid polypeptide reads, in one-letter code: Riboflavin synthase (238 aa).

Lumazine-binding repeat units lie at residues 1–103 (MFTG…FGGH) and 104–205 (YVQG…EKQI). 2,4-dihydroxypteridine contacts are provided by residues 4–6 (GIV), 54–56 (CLT), and 68–73 (GISPET). A Phosphoserine modification is found at serine 95. Residues 107–109 (GHV), lysine 143, 152–154 (SLT), and 170–175 (SMIKHT) contribute to the 2,4-dihydroxypteridine site.

Homotrimer.

The enzyme catalyses 2 6,7-dimethyl-8-(1-D-ribityl)lumazine + H(+) = 5-amino-6-(D-ribitylamino)uracil + riboflavin. It functions in the pathway cofactor biosynthesis; riboflavin biosynthesis; riboflavin from 2-hydroxy-3-oxobutyl phosphate and 5-amino-6-(D-ribitylamino)uracil: step 2/2. Functionally, catalyzes the dismutation of two molecules of 6,7-dimethyl-8-ribityllumazine, resulting in the formation of riboflavin and 5-amino-6-(D-ribitylamino)uracil. In Saccharomyces cerevisiae (strain ATCC 204508 / S288c) (Baker's yeast), this protein is Riboflavin synthase.